A 307-amino-acid polypeptide reads, in one-letter code: 4-hydroxythreonine-4-phosphate dehydrogenase (307 aa).

Substrate contacts are provided by His-126 and Thr-127. His-156, His-195, and His-251 together coordinate a divalent metal cation. Residues Lys-259, Asn-268, and Arg-277 each contribute to the substrate site.

The protein belongs to the PdxA family. Homodimer. Zn(2+) serves as cofactor. The cofactor is Mg(2+). Requires Co(2+) as cofactor.

The protein localises to the cytoplasm. It carries out the reaction 4-(phosphooxy)-L-threonine + NAD(+) = 3-amino-2-oxopropyl phosphate + CO2 + NADH. It participates in cofactor biosynthesis; pyridoxine 5'-phosphate biosynthesis; pyridoxine 5'-phosphate from D-erythrose 4-phosphate: step 4/5. Catalyzes the NAD(P)-dependent oxidation of 4-(phosphooxy)-L-threonine (HTP) into 2-amino-3-oxo-4-(phosphooxy)butyric acid which spontaneously decarboxylates to form 3-amino-2-oxopropyl phosphate (AHAP). The polypeptide is 4-hydroxythreonine-4-phosphate dehydrogenase (Helicobacter pylori (strain P12)).